We begin with the raw amino-acid sequence, 420 residues long: 3-isopropylmalate dehydratase large subunit (420 aa).

Positions 301, 361, and 364 each coordinate [4Fe-4S] cluster.

The protein belongs to the aconitase/IPM isomerase family. LeuC type 2 subfamily. As to quaternary structure, heterodimer of LeuC and LeuD. It depends on [4Fe-4S] cluster as a cofactor.

It catalyses the reaction (2R,3S)-3-isopropylmalate = (2S)-2-isopropylmalate. Its pathway is amino-acid biosynthesis; L-leucine biosynthesis; L-leucine from 3-methyl-2-oxobutanoate: step 2/4. Functionally, catalyzes the isomerization between 2-isopropylmalate and 3-isopropylmalate, via the formation of 2-isopropylmaleate. The chain is 3-isopropylmalate dehydratase large subunit from Desulfovibrio desulfuricans (strain ATCC 27774 / DSM 6949 / MB).